Consider the following 232-residue polypeptide: BTB/POZ domain-containing protein KCTD11 (232 aa).

In terms of domain architecture, BTB spans 1–49 (MLGAMFRAGTPMTPNLNPEGGGHYFIDRDGKAFRHILNFLRLGRLDLPL).

As to quaternary structure, homopentamer. Interacts with KCTD6 and KCTD21; KCTD11 and KCTD6 or KCTD21 may associate in pentameric assemblies. Component of the BCR(KCTD11) E3 ubiquitin ligase complex, at least composed of CUL3 and KCTD11 and RBX1. Interacts (via BTB domain) with CUL3; initially a 4:4 stoichiometry has been reported, however, electron microscopy revealed pentameric states of the BTB domain.

It participates in protein modification; protein ubiquitination. Functionally, plays a role as a marker and a regulator of neuronal differentiation; Up-regulated by a variety of neurogenic signals, such as retinoic acid, epidermal growth factor/EGF and NGFB/nerve growth factor. Induces apoptosis, growth arrest and the expression of cyclin-dependent kinase inhibitor CDKN1B. Plays a role as a tumor repressor and inhibits cell growth and tumorigenicity of medulloblastoma (MDB). Acts as a probable substrate-specific adapter for a BCR (BTB-CUL3-RBX1) E3 ubiquitin-protein ligase complex towards HDAC1. Functions as antagonist of the Hedgehog pathway on cell proliferation and differentiation by affecting the nuclear transfer of transcription factor GLI1, thus maintaining cerebellar granule cells in undifferentiated state, this effect probably occurs via HDAC1 down-regulation, keeping GLI1 acetylated and inactive. This is BTB/POZ domain-containing protein KCTD11 (KCTD11) from Bos taurus (Bovine).